Here is a 125-residue protein sequence, read N- to C-terminus: Cystatin-like cysteine protease inhibitor EPIC2B (125 aa).

A signal peptide spans M1–A21. N45 is a glycosylation site (N-linked (GlcNAc...) asparagine). Residues Q68–G72 carry the Secondary area of contact motif.

It belongs to the cystatin family. Interacts with the host papain-like cysteine protease PIP1. Interacts with the host papain-like cysteine protease RCR3. Interacts with the host papain-like cysteine protease C14.

Its subcellular location is the secreted. In terms of biological role, secreted effector that interacts with and inhibits the pathogenesis-related papain-like cysteine proteases C14, PIP1 and RCR3 of host plants. Inhibition of host proteases by a pathogen extracellular protease inhibitor forms a specific type of defense-counterdefense mechanism between plants and microbial pathogens. This is Cystatin-like cysteine protease inhibitor EPIC2B from Phytophthora infestans (strain T30-4) (Potato late blight agent).